The following is a 96-amino-acid chain: Co-chaperonin GroES (96 aa).

The protein belongs to the GroES chaperonin family. In terms of assembly, heptamer of 7 subunits arranged in a ring. Interacts with the chaperonin GroEL.

The protein resides in the cytoplasm. In terms of biological role, together with the chaperonin GroEL, plays an essential role in assisting protein folding. The GroEL-GroES system forms a nano-cage that allows encapsulation of the non-native substrate proteins and provides a physical environment optimized to promote and accelerate protein folding. GroES binds to the apical surface of the GroEL ring, thereby capping the opening of the GroEL channel. This Legionella micdadei (Tatlockia micdadei) protein is Co-chaperonin GroES.